A 704-amino-acid polypeptide reads, in one-letter code: Translin-associated factor X-interacting protein 1 (704 aa).

A disordered region spans residues 1–37 (MANLQERKSFSKPRISIQASGGTPEAKGIEKRKLSQK). 2 coiled-coil regions span residues 190 to 230 (EISV…AEEY) and 304 to 342 (RRDL…LQLH).

Interacts with TSNAX. As to expression, specifically expressed in testes. Predominantly detected in the post-meiotic stages of germ cells.

It localises to the cytoplasm. It is found in the perinuclear region. Possible role in spermatogenesis. This Mus musculus (Mouse) protein is Translin-associated factor X-interacting protein 1.